We begin with the raw amino-acid sequence, 23 residues long: PAWLVDCPCVGDDINRLLTRGEK.

A propeptide is located at residue P1. The segment at residues 2–8 (AWLVDCP) is a cross-link (cyclopeptide (Ala-Pro)). A cross-link (2'-cysteinyl-6'-hydroxytryptophan sulfoxide (Trp-Cys)) is located at residues 3-7 (WLVDC). The propeptide occupies 9 to 23 (CVGDDINRLLTRGEK).

The protein belongs to the MSDIN fungal toxin family. In terms of processing, processed by the macrocyclase-peptidase enzyme POPB to yield a toxic cyclic heptapeptide. POPB first removes 10 residues from the N-terminus. Conformational trapping of the remaining peptide forces the enzyme to release this intermediate rather than proceed to macrocyclization. The enzyme rebinds the remaining peptide in a different conformation and catalyzes macrocyclization of the N-terminal 7 residues.

In terms of biological role, major toxin that belongs to the bicyclic heptapeptides called phallotoxins. Although structurally related to amatoxins, phallotoxins have a different mode of action, which is the stabilization of F-actin. Phallotoxins are poisonous when administered parenterally, but not orally because of poor absorption. In Amanita phalloides (Death cap), this protein is Phallacidin proprotein 1.